The chain runs to 180 residues: dCTP deaminase (180 aa).

DCTP contacts are provided by residues 101–106 and Asp117; that span reads KSSFAR. The active-site Proton donor/acceptor is Glu127. Tyr159 and Gln168 together coordinate dCTP.

It belongs to the dCTP deaminase family. As to quaternary structure, homotrimer.

The enzyme catalyses dCTP + H2O + H(+) = dUTP + NH4(+). Its pathway is pyrimidine metabolism; dUMP biosynthesis; dUMP from dCTP (dUTP route): step 1/2. Functionally, catalyzes the deamination of dCTP to dUTP. This Ignicoccus hospitalis (strain KIN4/I / DSM 18386 / JCM 14125) protein is dCTP deaminase.